The following is a 509-amino-acid chain: Photosystem II CP47 reaction center protein (509 aa).

A run of 6 helical transmembrane segments spans residues 21–36, 101–115, 140–156, 203–218, 237–252, and 457–472; these read AVHL…WAGS, IILS…IWHW, GIHL…FGAF, IAAG…FHLT, VLSS…AFVT, and NFAL…HGGR.

It belongs to the PsbB/PsbC family. PsbB subfamily. As to quaternary structure, PSII is composed of 1 copy each of membrane proteins PsbA, PsbB, PsbC, PsbD, PsbE, PsbF, PsbH, PsbI, PsbJ, PsbK, PsbL, PsbM, PsbT, PsbX, PsbY, PsbZ, Psb30/Ycf12, at least 3 peripheral proteins of the oxygen-evolving complex and a large number of cofactors. It forms dimeric complexes. Requires Binds multiple chlorophylls. PSII binds additional chlorophylls, carotenoids and specific lipids. as cofactor.

Its subcellular location is the plastid. It localises to the chloroplast thylakoid membrane. One of the components of the core complex of photosystem II (PSII). It binds chlorophyll and helps catalyze the primary light-induced photochemical processes of PSII. PSII is a light-driven water:plastoquinone oxidoreductase, using light energy to abstract electrons from H(2)O, generating O(2) and a proton gradient subsequently used for ATP formation. The polypeptide is Photosystem II CP47 reaction center protein (Trieres chinensis (Marine centric diatom)).